A 258-amino-acid chain; its full sequence is Ribosomal RNA small subunit methyltransferase J (258 aa).

S-adenosyl-L-methionine contacts are provided by residues 123–124 and Asp-177; that span reads ER. A disordered region spans residues 232–258; sequence IDGPKPSHSLEGKSSRYDIYPKKALKA. Positions 239-252 are enriched in basic and acidic residues; the sequence is HSLEGKSSRYDIYP.

This sequence belongs to the methyltransferase superfamily. RsmJ family.

It is found in the cytoplasm. The catalysed reaction is guanosine(1516) in 16S rRNA + S-adenosyl-L-methionine = N(2)-methylguanosine(1516) in 16S rRNA + S-adenosyl-L-homocysteine + H(+). Functionally, specifically methylates the guanosine in position 1516 of 16S rRNA. The chain is Ribosomal RNA small subunit methyltransferase J from Pseudomonas putida (strain GB-1).